The sequence spans 214 residues: Urease accessory protein UreG (214 aa).

The disordered stretch occupies residues 1–20 (MSQLHAVPGRTKKLPPLRVG). 23–30 (GPVGSGKT) contributes to the GTP binding site.

It belongs to the SIMIBI class G3E GTPase family. UreG subfamily. In terms of assembly, homodimer. UreD, UreF and UreG form a complex that acts as a GTP-hydrolysis-dependent molecular chaperone, activating the urease apoprotein by helping to assemble the nickel containing metallocenter of UreC. The UreE protein probably delivers the nickel.

Its subcellular location is the cytoplasm. In terms of biological role, facilitates the functional incorporation of the urease nickel metallocenter. This process requires GTP hydrolysis, probably effectuated by UreG. The sequence is that of Urease accessory protein UreG from Leptothrix cholodnii (strain ATCC 51168 / LMG 8142 / SP-6) (Leptothrix discophora (strain SP-6)).